Reading from the N-terminus, the 179-residue chain is Ribosome maturation factor RimM (179 aa).

In terms of domain architecture, PRC barrel spans 103–176 (EPDTYYDHQL…IVEIDPPKGL (74 aa)).

The protein belongs to the RimM family. As to quaternary structure, binds ribosomal protein uS19.

It is found in the cytoplasm. Functionally, an accessory protein needed during the final step in the assembly of 30S ribosomal subunit, possibly for assembly of the head region. Essential for efficient processing of 16S rRNA. May be needed both before and after RbfA during the maturation of 16S rRNA. It has affinity for free ribosomal 30S subunits but not for 70S ribosomes. In Mycobacterium leprae (strain Br4923), this protein is Ribosome maturation factor RimM.